A 77-amino-acid polypeptide reads, in one-letter code: NAD(P)H-quinone oxidoreductase subunit L (77 aa).

2 consecutive transmembrane segments (helical) span residues 10-30 (LLIATLYLSLSVTYLLVLPAG) and 48-68 (LVMYFFVFFLFPGMLLLSPFL).

It belongs to the complex I NdhL subunit family. As to quaternary structure, NDH-1 can be composed of about 15 different subunits; different subcomplexes with different compositions have been identified which probably have different functions.

It is found in the cellular thylakoid membrane. The enzyme catalyses a plastoquinone + NADH + (n+1) H(+)(in) = a plastoquinol + NAD(+) + n H(+)(out). The catalysed reaction is a plastoquinone + NADPH + (n+1) H(+)(in) = a plastoquinol + NADP(+) + n H(+)(out). NDH-1 shuttles electrons from an unknown electron donor, via FMN and iron-sulfur (Fe-S) centers, to quinones in the respiratory and/or the photosynthetic chain. The immediate electron acceptor for the enzyme in this species is believed to be plastoquinone. Couples the redox reaction to proton translocation, and thus conserves the redox energy in a proton gradient. Cyanobacterial NDH-1 also plays a role in inorganic carbon-concentration. This chain is NAD(P)H-quinone oxidoreductase subunit L, found in Picosynechococcus sp. (strain ATCC 27264 / PCC 7002 / PR-6) (Agmenellum quadruplicatum).